Here is a 384-residue protein sequence, read N- to C-terminus: Carbamoyl phosphate synthase small chain (384 aa).

Residues 1-192 are CPSase; the sequence is MIKKIPAILV…LADRNREKIY (192 aa). Serine 51, glycine 244, and glycine 246 together coordinate L-glutamine. Residues 196-382 enclose the Glutamine amidotransferase type-1 domain; that stretch reads KVIVIDFGVK…IEIMKQFRKE (187 aa). The active-site Nucleophile is cysteine 272. The L-glutamine site is built by methionine 273, glutamine 276, asparagine 312, glycine 314, and phenylalanine 315. Active-site residues include histidine 355 and glutamate 357.

The protein belongs to the CarA family. As to quaternary structure, composed of two chains; the small (or glutamine) chain promotes the hydrolysis of glutamine to ammonia, which is used by the large (or ammonia) chain to synthesize carbamoyl phosphate. Tetramer of heterodimers (alpha,beta)4.

The protein localises to the plastid. The protein resides in the chloroplast. It carries out the reaction hydrogencarbonate + L-glutamine + 2 ATP + H2O = carbamoyl phosphate + L-glutamate + 2 ADP + phosphate + 2 H(+). It catalyses the reaction L-glutamine + H2O = L-glutamate + NH4(+). It functions in the pathway amino-acid biosynthesis; L-arginine biosynthesis; carbamoyl phosphate from bicarbonate: step 1/1. Its pathway is pyrimidine metabolism; UMP biosynthesis via de novo pathway; (S)-dihydroorotate from bicarbonate: step 1/3. Small subunit of the glutamine-dependent carbamoyl phosphate synthetase (CPSase). CPSase catalyzes the formation of carbamoyl phosphate from the ammonia moiety of glutamine, carbonate, and phosphate donated by ATP, constituting the first step of 2 biosynthetic pathways, one leading to arginine and/or urea and the other to pyrimidine nucleotides. The small subunit (glutamine amidotransferase) binds and cleaves glutamine to supply the large subunit with the substrate ammonia. This Porphyra purpurea (Red seaweed) protein is Carbamoyl phosphate synthase small chain.